Here is an 843-residue protein sequence, read N- to C-terminus: DNA gyrase subunit A (843 aa).

Residues 61–528 (LPDVRDGLKP…ESSTFNAEDL (468 aa)) enclose the Topo IIA-type catalytic domain. The O-(5'-phospho-DNA)-tyrosine intermediate role is filled by Tyr-149. Residues 555 to 561 (QKRGGKG) carry the GyrA-box motif.

This sequence belongs to the type II topoisomerase GyrA/ParC subunit family. Heterotetramer, composed of two GyrA and two GyrB chains. In the heterotetramer, GyrA contains the active site tyrosine that forms a transient covalent intermediate with DNA, while GyrB binds cofactors and catalyzes ATP hydrolysis.

It is found in the cytoplasm. It catalyses the reaction ATP-dependent breakage, passage and rejoining of double-stranded DNA.. Functionally, a type II topoisomerase that negatively supercoils closed circular double-stranded (ds) DNA in an ATP-dependent manner to modulate DNA topology and maintain chromosomes in an underwound state. Negative supercoiling favors strand separation, and DNA replication, transcription, recombination and repair, all of which involve strand separation. Also able to catalyze the interconversion of other topological isomers of dsDNA rings, including catenanes and knotted rings. Type II topoisomerases break and join 2 DNA strands simultaneously in an ATP-dependent manner. This chain is DNA gyrase subunit A, found in Leptospira biflexa serovar Patoc (strain Patoc 1 / Ames).